The sequence spans 391 residues: Processive diacylglycerol beta-glucosyltransferase (391 aa).

It belongs to the glycosyltransferase 28 family. UgtP subfamily.

Its subcellular location is the cell membrane. It catalyses the reaction a 1,2-diacyl-3-O-(beta-D-glucopyranosyl)-sn-glycerol + UDP-alpha-D-glucose = a 1,2-diacyl-3-O-(beta-D-Glc-(1-&gt;6)-beta-D-Glc)-sn-glycerol + UDP + H(+). The enzyme catalyses a 1,2-diacyl-sn-glycerol + UDP-alpha-D-glucose = a 1,2-diacyl-3-O-(beta-D-glucopyranosyl)-sn-glycerol + UDP + H(+). It participates in glycolipid metabolism; diglucosyl-diacylglycerol biosynthesis. Functionally, processive glucosyltransferase involved in the biosynthesis of both the bilayer- and non-bilayer-forming membrane glucolipids. Is able to successively transfer two glucosyl residues to diacylglycerol (DAG), thereby catalyzing the formation of beta-monoglucosyl-DAG (3-O-(beta-D-glucopyranosyl)-1,2-diacyl-sn-glycerol) and beta-diglucosyl-DAG (3-O-(beta-D-glucopyranosyl-beta-(1-&gt;6)-D-glucopyranosyl)-1,2-diacyl-sn-glycerol). Beta-diglucosyl-DAG is the predominant glycolipid found in Bacillales and is also used as a membrane anchor for lipoteichoic acid (LTA). The sequence is that of Processive diacylglycerol beta-glucosyltransferase from Staphylococcus aureus (strain Mu3 / ATCC 700698).